Reading from the N-terminus, the 177-residue chain is ATP synthase subunit delta 1 (177 aa).

This sequence belongs to the ATPase delta chain family. As to quaternary structure, F-type ATPases have 2 components, F(1) - the catalytic core - and F(0) - the membrane proton channel. F(1) has five subunits: alpha(3), beta(3), gamma(1), delta(1), epsilon(1). F(0) has three main subunits: a(1), b(2) and c(10-14). The alpha and beta chains form an alternating ring which encloses part of the gamma chain. F(1) is attached to F(0) by a central stalk formed by the gamma and epsilon chains, while a peripheral stalk is formed by the delta and b chains.

It is found in the cell inner membrane. In terms of biological role, f(1)F(0) ATP synthase produces ATP from ADP in the presence of a proton or sodium gradient. F-type ATPases consist of two structural domains, F(1) containing the extramembraneous catalytic core and F(0) containing the membrane proton channel, linked together by a central stalk and a peripheral stalk. During catalysis, ATP synthesis in the catalytic domain of F(1) is coupled via a rotary mechanism of the central stalk subunits to proton translocation. Its function is as follows. This protein is part of the stalk that links CF(0) to CF(1). It either transmits conformational changes from CF(0) to CF(1) or is implicated in proton conduction. The protein is ATP synthase subunit delta 1 of Vibrio campbellii (strain ATCC BAA-1116).